The chain runs to 240 residues: Phosducin-like protein 3 (240 aa).

M1 bears the N-acetylmethionine mark. Residues 27–181 (KELEEEEAEK…EGDIKAQFIG (155 aa)) form the Phosducin domain. 4 positions are modified to phosphoserine: S44, S65, S235, and S237. The segment at 92–240 (FGEVLEISGK…MRRDSDSEDD (149 aa)) is thioredoxin fold.

It belongs to the phosducin family. In terms of assembly, interacts (via thioredoxin fold region) with KDR/VEGFR2 (via juxtamembrane domain). Forms ternary complexes with the chaperonin CCT complex and actin substrate, leading to inhibition of actin folding. Interacts with XIAP (via BIR 3 and RING domain). Interacts with HSP90AA1 and HSP90AB1. In terms of processing, N-terminal methionine acetylation destabilizes the protein. Expressed in blood vessels (at protein level).

It is found in the cytoplasm. The protein resides in the perinuclear region. Its subcellular location is the endoplasmic reticulum. Its function is as follows. Acts as a chaperone for the angiogenic VEGF receptor KDR/VEGFR2, increasing its abundance by inhibiting its ubiquitination and degradation. Inhibits the folding activity of the chaperonin-containing T-complex (CCT) which leads to inhibition of cytoskeletal actin folding. Acts as a chaperone during heat shock alongside HSP90 and HSP40/70 chaperone complexes. Modulates the activation of caspases during apoptosis. The sequence is that of Phosducin-like protein 3 (Pdcl3) from Mus musculus (Mouse).